The sequence spans 213 residues: uncharacterized protein (213 aa).

Positions 1-11 (MFATKDPEFEN) are enriched in basic and acidic residues. Disordered stretches follow at residues 1–21 (MFAT…SPRN) and 63–98 (LRNK…EQAW). The span at 12 to 21 (RINTNKSPRN) shows a compositional bias: polar residues. Positions 63-93 (LRNKAPKNEETKHEEHTPDNHEETDHHEAKQ) are enriched in basic and acidic residues.

This is an uncharacterized protein from Escherichia coli (strain K12).